We begin with the raw amino-acid sequence, 472 residues long: ATP synthase subunit beta (472 aa).

Residue 156–163 participates in ATP binding; it reads GGAGVGKT.

The protein belongs to the ATPase alpha/beta chains family. As to quaternary structure, F-type ATPases have 2 components, CF(1) - the catalytic core - and CF(0) - the membrane proton channel. CF(1) has five subunits: alpha(3), beta(3), gamma(1), delta(1), epsilon(1). CF(0) has three main subunits: a(1), b(2) and c(9-12). The alpha and beta chains form an alternating ring which encloses part of the gamma chain. CF(1) is attached to CF(0) by a central stalk formed by the gamma and epsilon chains, while a peripheral stalk is formed by the delta and b chains.

Its subcellular location is the cell membrane. The enzyme catalyses ATP + H2O + 4 H(+)(in) = ADP + phosphate + 5 H(+)(out). Functionally, produces ATP from ADP in the presence of a proton gradient across the membrane. The catalytic sites are hosted primarily by the beta subunits. The chain is ATP synthase subunit beta from Symbiobacterium thermophilum (strain DSM 24528 / JCM 14929 / IAM 14863 / T).